A 329-amino-acid polypeptide reads, in one-letter code: Glutamine synthetase (329 aa).

The GS beta-grasp domain occupies 4–86 (YKLEYIWLDA…VMCEVMMPDA (83 aa)). The GS catalytic domain occupies 89 to 329 (PHASNTRATV…GDPYQMLLSS (241 aa)). The Mg(2+) site is built by glutamate 109 and glutamate 111. Glutamate 167 is an ATP binding site. 2 residues coordinate Mg(2+): glutamate 172 and glutamate 179. Glutamate 278 is an L-glutamate binding site.

Belongs to the glutamine synthetase family. As to quaternary structure, homooctamer and homotetramer. Mg(2+) serves as cofactor.

It localises to the cytoplasm. The enzyme catalyses L-glutamate + NH4(+) + ATP = L-glutamine + ADP + phosphate + H(+). Its function is as follows. Catalyzes the ATP-dependent biosynthesis of glutamine from glutamate and ammonia. The protein is Glutamine synthetase of Rhizobium meliloti (Ensifer meliloti).